The primary structure comprises 875 residues: Neurotrypsin (875 aa).

Residues 1–20 (MTLARFVLALMLGALPEVVG) form the signal peptide. N-linked (GlcNAc...) asparagine glycosylation is present at Asn26. The segment at 29–88 (LHHSHRHSPPPGPHYPYYLPTQQRPPRTRPPPPLPRFPRPPRALPAQRPHALQAGHTPRP) is disordered. Residues 43–53 (YPYYLPTQQRP) are compositionally biased toward low complexity. Residues 56–71 (TRPPPPLPRFPRPPRA) show a composition bias toward pro residues. One can recognise a Kringle domain in the interval 93–165 (CPAGEPWVSV…GKVDWGYCDC (73 aa)). Intrachain disulfides connect Cys93–Cys165, Cys109–Cys149, Cys138–Cys163, Cys195–Cys259, Cys208–Cys269, Cys239–Cys249, Cys305–Cys369, Cys318–Cys379, Cys349–Cys359, Cys412–Cys475, Cys425–Cys485, Cys455–Cys465, Cys525–Cys589, Cys538–Cys599, Cys569–Cys579, Cys619–Cys750, Cys661–Cys677, Cys765–Cys831, Cys794–Cys808, and Cys821–Cys850. 4 SRCR domains span residues 170–271 (VRLR…TCSF), 280–381 (IRLA…SCTP), 387–487 (IRLA…ACYP), and 500–601 (VRLV…ICDY). The zymogen activation region stretch occupies residues 619–630 (CGLRLLHRRQKR). Residues 631 to 874 (IIGGKNSLRG…FVPWIKSVTK (244 aa)) enclose the Peptidase S1 domain. The active-site Charge relay system is the His676. N-linked (GlcNAc...) asparagine glycosylation occurs at Asn683. Asp726 serves as the catalytic Charge relay system. Ser825 serves as the catalytic Charge relay system.

Belongs to the peptidase S1 family.

It is found in the secreted. Plays a role in neuronal plasticity and the proteolytic action may subserve structural reorganizations associated with learning and memory operations. In Pan troglodytes (Chimpanzee), this protein is Neurotrypsin (PRSS12).